A 463-amino-acid chain; its full sequence is tRNA-2-methylthio-N(6)-dimethylallyladenosine synthase (463 aa).

Positions 18–136 (RKLYIETYGC…LPNLVGAAEQ (119 aa)) constitute an MTTase N-terminal domain. C27, C63, C100, C174, C178, and C181 together coordinate [4Fe-4S] cluster. In terms of domain architecture, Radical SAM core spans 160 to 392 (GGVHINGFVS…IALQNRLSEE (233 aa)). Residues 395 to 458 (KRDIGKTFEV…SATLFGEVVE (64 aa)) form the TRAM domain.

It belongs to the methylthiotransferase family. MiaB subfamily. In terms of assembly, monomer. Requires [4Fe-4S] cluster as cofactor.

Its subcellular location is the cytoplasm. It catalyses the reaction N(6)-dimethylallyladenosine(37) in tRNA + (sulfur carrier)-SH + AH2 + 2 S-adenosyl-L-methionine = 2-methylsulfanyl-N(6)-dimethylallyladenosine(37) in tRNA + (sulfur carrier)-H + 5'-deoxyadenosine + L-methionine + A + S-adenosyl-L-homocysteine + 2 H(+). Functionally, catalyzes the methylthiolation of N6-(dimethylallyl)adenosine (i(6)A), leading to the formation of 2-methylthio-N6-(dimethylallyl)adenosine (ms(2)i(6)A) at position 37 in tRNAs that read codons beginning with uridine. The polypeptide is tRNA-2-methylthio-N(6)-dimethylallyladenosine synthase (Porphyromonas gingivalis (strain ATCC BAA-308 / W83)).